A 357-amino-acid polypeptide reads, in one-letter code: UDP-N-acetylglucosamine--N-acetylmuramyl-(pentapeptide) pyrophosphoryl-undecaprenol N-acetylglucosamine transferase (357 aa).

Residues 12–14 (TAG), Arg166, Ser196, and Gln291 contribute to the UDP-N-acetyl-alpha-D-glucosamine site.

This sequence belongs to the glycosyltransferase 28 family. MurG subfamily.

It localises to the cell membrane. It catalyses the reaction di-trans,octa-cis-undecaprenyl diphospho-N-acetyl-alpha-D-muramoyl-L-alanyl-D-glutamyl-meso-2,6-diaminopimeloyl-D-alanyl-D-alanine + UDP-N-acetyl-alpha-D-glucosamine = di-trans,octa-cis-undecaprenyl diphospho-[N-acetyl-alpha-D-glucosaminyl-(1-&gt;4)]-N-acetyl-alpha-D-muramoyl-L-alanyl-D-glutamyl-meso-2,6-diaminopimeloyl-D-alanyl-D-alanine + UDP + H(+). The protein operates within cell wall biogenesis; peptidoglycan biosynthesis. Functionally, cell wall formation. Catalyzes the transfer of a GlcNAc subunit on undecaprenyl-pyrophosphoryl-MurNAc-pentapeptide (lipid intermediate I) to form undecaprenyl-pyrophosphoryl-MurNAc-(pentapeptide)GlcNAc (lipid intermediate II). This Geobacillus kaustophilus (strain HTA426) protein is UDP-N-acetylglucosamine--N-acetylmuramyl-(pentapeptide) pyrophosphoryl-undecaprenol N-acetylglucosamine transferase.